Reading from the N-terminus, the 422-residue chain is Serine--tRNA ligase (422 aa).

227 to 229 (TSE) contributes to the L-serine binding site. Residues 258–260 (RRE) and Val-274 contribute to the ATP site. Glu-281 is an L-serine binding site. 345-348 (ELTS) is an ATP binding site. An L-serine-binding site is contributed by Thr-380.

Belongs to the class-II aminoacyl-tRNA synthetase family. Type-1 seryl-tRNA synthetase subfamily. As to quaternary structure, homodimer. The tRNA molecule binds across the dimer.

It localises to the cytoplasm. The enzyme catalyses tRNA(Ser) + L-serine + ATP = L-seryl-tRNA(Ser) + AMP + diphosphate + H(+). It catalyses the reaction tRNA(Sec) + L-serine + ATP = L-seryl-tRNA(Sec) + AMP + diphosphate + H(+). Its pathway is aminoacyl-tRNA biosynthesis; selenocysteinyl-tRNA(Sec) biosynthesis; L-seryl-tRNA(Sec) from L-serine and tRNA(Sec): step 1/1. Catalyzes the attachment of serine to tRNA(Ser). Is also able to aminoacylate tRNA(Sec) with serine, to form the misacylated tRNA L-seryl-tRNA(Sec), which will be further converted into selenocysteinyl-tRNA(Sec). The polypeptide is Serine--tRNA ligase (Thermobifida fusca (strain YX)).